The following is a 106-amino-acid chain: Large ribosomal subunit protein uL30 (106 aa).

Belongs to the universal ribosomal protein uL30 family. In terms of assembly, part of the 50S ribosomal subunit.

The sequence is that of Large ribosomal subunit protein uL30 from Ruthia magnifica subsp. Calyptogena magnifica.